A 359-amino-acid polypeptide reads, in one-letter code: Phospho-N-acetylmuramoyl-pentapeptide-transferase (359 aa).

The next 10 membrane-spanning stretches (helical) occupy residues Gln-3–Ile-23, Val-55–Ile-75, Gly-84–Ile-104, Thr-117–Phe-137, Ile-156–Ala-176, Leu-190–Phe-210, Leu-231–Ala-251, Ile-255–Thr-275, Val-283–Phe-303, and Val-330–Tyr-350.

This sequence belongs to the glycosyltransferase 4 family. MraY subfamily. Mg(2+) is required as a cofactor.

It localises to the cell membrane. It carries out the reaction UDP-N-acetyl-alpha-D-muramoyl-L-alanyl-gamma-D-glutamyl-meso-2,6-diaminopimeloyl-D-alanyl-D-alanine + di-trans,octa-cis-undecaprenyl phosphate = di-trans,octa-cis-undecaprenyl diphospho-N-acetyl-alpha-D-muramoyl-L-alanyl-D-glutamyl-meso-2,6-diaminopimeloyl-D-alanyl-D-alanine + UMP. It participates in cell wall biogenesis; peptidoglycan biosynthesis. Functionally, catalyzes the initial step of the lipid cycle reactions in the biosynthesis of the cell wall peptidoglycan: transfers peptidoglycan precursor phospho-MurNAc-pentapeptide from UDP-MurNAc-pentapeptide onto the lipid carrier undecaprenyl phosphate, yielding undecaprenyl-pyrophosphoryl-MurNAc-pentapeptide, known as lipid I. The protein is Phospho-N-acetylmuramoyl-pentapeptide-transferase of Mycolicibacterium vanbaalenii (strain DSM 7251 / JCM 13017 / BCRC 16820 / KCTC 9966 / NRRL B-24157 / PYR-1) (Mycobacterium vanbaalenii).